A 188-amino-acid polypeptide reads, in one-letter code: Pyridoxal 5'-phosphate synthase subunit PdxT (188 aa).

47-49 contacts L-glutamine; sequence GES. Cys-79 acts as the Nucleophile in catalysis. L-glutamine is bound by residues Arg-105 and 134–135; that span reads IR. Active-site charge relay system residues include His-170 and Glu-172.

Belongs to the glutaminase PdxT/SNO family. In terms of assembly, in the presence of PdxS, forms a dodecamer of heterodimers. Only shows activity in the heterodimer.

The enzyme catalyses aldehydo-D-ribose 5-phosphate + D-glyceraldehyde 3-phosphate + L-glutamine = pyridoxal 5'-phosphate + L-glutamate + phosphate + 3 H2O + H(+). It carries out the reaction L-glutamine + H2O = L-glutamate + NH4(+). Its pathway is cofactor biosynthesis; pyridoxal 5'-phosphate biosynthesis. Catalyzes the hydrolysis of glutamine to glutamate and ammonia as part of the biosynthesis of pyridoxal 5'-phosphate. The resulting ammonia molecule is channeled to the active site of PdxS. This is Pyridoxal 5'-phosphate synthase subunit PdxT from Listeria welshimeri serovar 6b (strain ATCC 35897 / DSM 20650 / CCUG 15529 / CIP 8149 / NCTC 11857 / SLCC 5334 / V8).